Reading from the N-terminus, the 101-residue chain is Small ribosomal subunit protein uS14 (101 aa).

The protein belongs to the universal ribosomal protein uS14 family. In terms of assembly, part of the 30S ribosomal subunit. Contacts proteins S3 and S10.

In terms of biological role, binds 16S rRNA, required for the assembly of 30S particles and may also be responsible for determining the conformation of the 16S rRNA at the A site. The chain is Small ribosomal subunit protein uS14 from Ehrlichia chaffeensis (strain ATCC CRL-10679 / Arkansas).